A 243-amino-acid polypeptide reads, in one-letter code: Carboxy-S-adenosyl-L-methionine synthase (243 aa).

Residues Y40, 65–67 (GCS), 90–91 (DN), 118–119 (DI), N133, and R200 contribute to the S-adenosyl-L-methionine site.

It belongs to the class I-like SAM-binding methyltransferase superfamily. Cx-SAM synthase family. As to quaternary structure, homodimer.

The catalysed reaction is prephenate + S-adenosyl-L-methionine = carboxy-S-adenosyl-L-methionine + 3-phenylpyruvate + H2O. Functionally, catalyzes the conversion of S-adenosyl-L-methionine (SAM) to carboxy-S-adenosyl-L-methionine (Cx-SAM). In Shewanella oneidensis (strain ATCC 700550 / JCM 31522 / CIP 106686 / LMG 19005 / NCIMB 14063 / MR-1), this protein is Carboxy-S-adenosyl-L-methionine synthase.